Consider the following 401-residue polypeptide: Deacetoxyvindoline 4-hydroxylase (401 aa).

Residues 242–345 (CAEGLILLGH…SVAVAFGIKT (104 aa)) enclose the Fe2OG dioxygenase domain. Fe cation-binding residues include histidine 268, aspartate 270, and histidine 324. Arginine 334 provides a ligand contact to 2-oxoglutarate.

Belongs to the iron/ascorbate-dependent oxidoreductase family. Monomer. Fe cation serves as cofactor. It depends on L-ascorbate as a cofactor. In terms of tissue distribution, highest levels in leaves, lower levels in stems and fruits. Not expressed in flowers and roots.

Its subcellular location is the cytoplasm. The protein localises to the nucleus. The enzyme catalyses deacetoxyvindoline + 2-oxoglutarate + O2 = 4-O-deacetylvindoline + succinate + CO2. The protein operates within alkaloid biosynthesis; vindoline biosynthesis. Its function is as follows. Catalyzes the C4-hydroxylation of desacetoxyvindoline. This Catharanthus roseus (Madagascar periwinkle) protein is Deacetoxyvindoline 4-hydroxylase.